The primary structure comprises 537 residues: MNCSPPGSSTDTERQSSSSGTPVAPRPTLAPTHPLRQANRLPIRLLKMLTAHTGHLLHPEYLQPLSSTPVSPIELDAKKSPLALLAQTCSQIGKPDPPPSSKLNSVTSSGLSEKESGRSSSLKLGESPLEDKSSFKPYSKGGESRKESGSSSGGAADKAGFRVPSGSCQPFPHAPSPSSRVSSPGQHCDSKNNESQEKKEPEANKANSETSQVNPTLTRASTSNSSAESSQSGDVTPISKADPPSLGSGHVAPVSPYKPGHSVFPLPPSGIGYHGSIVGAYAGYPSQFVPGLDHTKTSLVGNQLPGTLGLPGKPPSSSPLTGASPPSFMQGLCRDPYCLSYHNASHLGSSSCSTCVHDPSALKSGYPLVYPSHPLHSVHTTLSSSVTPSLPGHPLYTYGFMLPNDPVPHICNWVSASGPCDKRFSTSEELLAHLRTHTALPGADKLLAGYPTSTLGSAASCHLHLPPAGPGSPNTLPGSLSLRSPHSLGLSRYHPYGKGHLTTPSGLPLPSLPAGSYYSPYALYGQRLTSASALGYQ.

Disordered stretches follow at residues 1–38, 90–254, and 300–323; these read MNCSPPGSSTDTERQSSSSGTPVAPRPTLAPTHPLRQA, SQIG…VAPV, and VGNQLPGTLGLPGKPPSSSPLTGA. Polar residues predominate over residues 101–111; the sequence is SKLNSVTSSGL. Low complexity predominate over residues 149-158; the sequence is GSSSGGAADK. Over residues 176–185 the composition is skewed to polar residues; the sequence is SPSSRVSSPG. Residues 188–203 are compositionally biased toward basic and acidic residues; that stretch reads CDSKNNESQEKKEPEA. Over residues 205-220 the composition is skewed to polar residues; sequence KANSETSQVNPTLTRA. Residues 221 to 232 are compositionally biased toward low complexity; it reads STSNSSAESSQS. Residues 409–437 form a C2H2-type zinc finger; the sequence is HICNWVSASGPCDKRFSTSEELLAHLRTH.

The protein belongs to the Elbow/Noc family.

It is found in the nucleus. The protein resides in the cytoplasm. In terms of biological role, transcriptional corepressor which does not bind directly to DNA and may regulate transcription through recruitment of histone deacetylases to gene promoters. Regulates cell adhesion, migration and proliferation. Involved in specification of the lateral neural plate border (NPB). May be required for segmental gene expression during hindbrain development. In Xenopus tropicalis (Western clawed frog), this protein is Zinc finger protein 703 (znf703).